The following is a 1066-amino-acid chain: Carbamoyl phosphate synthase large chain (1066 aa).

Residues 1-401 form a carboxyphosphate synthetic domain region; it reads MPKNNNIKKV…ALMKAVRSLE (401 aa). Residues Arg129, Arg169, Gly175, Gly176, Arg208, Ile210, Glu215, Gly241, Val242, His243, Gln284, and Glu298 each coordinate ATP. Positions 133–327 constitute an ATP-grasp 1 domain; it reads KNTMEKIGEP…IAKVAAKIAL (195 aa). The Mg(2+) site is built by Gln284, Glu298, and Asn300. Residues Gln284, Glu298, and Asn300 each contribute to the Mn(2+) site. The segment at 402–547 is oligomerization domain; that stretch reads QNIYSMNYGD…YSCFDSENEV (146 aa). The interval 548 to 931 is carbamoyl phosphate synthetic domain; it reads DATKTKKKVL…ALYKAFLGAG (384 aa). Residues 673–863 enclose the ATP-grasp 2 domain; that stretch reads DEILEKCCIP…IVSLASKAVL (191 aa). The ATP site is built by Arg709, Lys748, Leu750, Glu754, Gly779, Ile780, His781, Ser782, Gln822, and Glu834. Mg(2+) is bound by residues Gln822, Glu834, and Asn836. Mn(2+)-binding residues include Gln822, Glu834, and Asn836. An MGS-like domain is found at 932–1066; the sequence is INLPKHKKMI…ELSLIDIARI (135 aa). The tract at residues 932–1066 is allosteric domain; that stretch reads INLPKHKKMI…ELSLIDIARI (135 aa).

It belongs to the CarB family. In terms of assembly, composed of two chains; the small (or glutamine) chain promotes the hydrolysis of glutamine to ammonia, which is used by the large (or ammonia) chain to synthesize carbamoyl phosphate. Tetramer of heterodimers (alpha,beta)4. Mg(2+) is required as a cofactor. Mn(2+) serves as cofactor.

The catalysed reaction is hydrogencarbonate + L-glutamine + 2 ATP + H2O = carbamoyl phosphate + L-glutamate + 2 ADP + phosphate + 2 H(+). It catalyses the reaction hydrogencarbonate + NH4(+) + 2 ATP = carbamoyl phosphate + 2 ADP + phosphate + 2 H(+). Its pathway is amino-acid biosynthesis; L-arginine biosynthesis; carbamoyl phosphate from bicarbonate: step 1/1. It participates in pyrimidine metabolism; UMP biosynthesis via de novo pathway; (S)-dihydroorotate from bicarbonate: step 1/3. Functionally, large subunit of the glutamine-dependent carbamoyl phosphate synthetase (CPSase). CPSase catalyzes the formation of carbamoyl phosphate from the ammonia moiety of glutamine, carbonate, and phosphate donated by ATP, constituting the first step of 2 biosynthetic pathways, one leading to arginine and/or urea and the other to pyrimidine nucleotides. The large subunit (synthetase) binds the substrates ammonia (free or transferred from glutamine from the small subunit), hydrogencarbonate and ATP and carries out an ATP-coupled ligase reaction, activating hydrogencarbonate by forming carboxy phosphate which reacts with ammonia to form carbamoyl phosphate. This is Carbamoyl phosphate synthase large chain from Lachnoclostridium phytofermentans (strain ATCC 700394 / DSM 18823 / ISDg) (Clostridium phytofermentans).